A 329-amino-acid chain; its full sequence is Glycerol-3-phosphate dehydrogenase [NAD(P)+] (329 aa).

The NADPH site is built by S13, W14, H34, and K105. Positions 105, 134, and 136 each coordinate sn-glycerol 3-phosphate. Residue A138 participates in NADPH binding. The sn-glycerol 3-phosphate site is built by K189, D242, S252, R253, and N254. K189 functions as the Proton acceptor in the catalytic mechanism. NADPH is bound at residue R253. NADPH is bound by residues V277 and E279.

It belongs to the NAD-dependent glycerol-3-phosphate dehydrogenase family.

It is found in the cytoplasm. It carries out the reaction sn-glycerol 3-phosphate + NAD(+) = dihydroxyacetone phosphate + NADH + H(+). The enzyme catalyses sn-glycerol 3-phosphate + NADP(+) = dihydroxyacetone phosphate + NADPH + H(+). It functions in the pathway membrane lipid metabolism; glycerophospholipid metabolism. Functionally, catalyzes the reduction of the glycolytic intermediate dihydroxyacetone phosphate (DHAP) to sn-glycerol 3-phosphate (G3P), the key precursor for phospholipid synthesis. This Legionella pneumophila subsp. pneumophila (strain Philadelphia 1 / ATCC 33152 / DSM 7513) protein is Glycerol-3-phosphate dehydrogenase [NAD(P)+].